The sequence spans 539 residues: 2-isopropylmalate synthase (539 aa).

Residues 8 to 269 (VLIFDTTLRD…YFNPFFGRPP (262 aa)) enclose the Pyruvate carboxyltransferase domain. Mn(2+)-binding residues include aspartate 17, histidine 208, histidine 210, and asparagine 244. The regulatory domain stretch occupies residues 408–539 (QLKLVQVSCG…DLAKVEKKGI (132 aa)).

Belongs to the alpha-IPM synthase/homocitrate synthase family. LeuA type 1 subfamily. As to quaternary structure, homodimer. It depends on Mn(2+) as a cofactor.

Its subcellular location is the cytoplasm. It carries out the reaction 3-methyl-2-oxobutanoate + acetyl-CoA + H2O = (2S)-2-isopropylmalate + CoA + H(+). The protein operates within amino-acid biosynthesis; L-leucine biosynthesis; L-leucine from 3-methyl-2-oxobutanoate: step 1/4. Catalyzes the condensation of the acetyl group of acetyl-CoA with 3-methyl-2-oxobutanoate (2-ketoisovalerate) to form 3-carboxy-3-hydroxy-4-methylpentanoate (2-isopropylmalate). This chain is 2-isopropylmalate synthase, found in Prochlorococcus marinus (strain NATL2A).